Consider the following 257-residue polypeptide: NAD-capped RNA hydrolase NudC (257 aa).

Residues Lys25 and Arg69 each coordinate substrate. Zn(2+) contacts are provided by Cys98 and Cys101. Glu111 contacts substrate. Zn(2+) contacts are provided by Cys116 and Cys119. Tyr124 is a binding site for substrate. In terms of domain architecture, Nudix hydrolase spans 125 to 248 (PQIAPCIIVA…TVARRLIEDT (124 aa)). Positions 158, 174, and 178 each coordinate a divalent metal cation. The Nudix box signature appears at 159 to 180 (GFVEVGETLEQAVAREVMEESG). 192–199 (QPWPFPQS) serves as a coordination point for substrate. Glu219 provides a ligand contact to a divalent metal cation. Ala241 is a binding site for substrate.

This sequence belongs to the Nudix hydrolase family. NudC subfamily. Homodimer. The cofactor is Mg(2+). Mn(2+) serves as cofactor. Zn(2+) is required as a cofactor.

It carries out the reaction a 5'-end NAD(+)-phospho-ribonucleoside in mRNA + H2O = a 5'-end phospho-adenosine-phospho-ribonucleoside in mRNA + beta-nicotinamide D-ribonucleotide + 2 H(+). The enzyme catalyses NAD(+) + H2O = beta-nicotinamide D-ribonucleotide + AMP + 2 H(+). The catalysed reaction is NADH + H2O = reduced beta-nicotinamide D-ribonucleotide + AMP + 2 H(+). Its function is as follows. mRNA decapping enzyme that specifically removes the nicotinamide adenine dinucleotide (NAD) cap from a subset of mRNAs by hydrolyzing the diphosphate linkage to produce nicotinamide mononucleotide (NMN) and 5' monophosphate mRNA. The NAD-cap is present at the 5'-end of some mRNAs and stabilizes RNA against 5'-processing. Has preference for mRNAs with a 5'-end purine. Catalyzes the hydrolysis of a broad range of dinucleotide pyrophosphates. The polypeptide is NAD-capped RNA hydrolase NudC (Escherichia fergusonii (strain ATCC 35469 / DSM 13698 / CCUG 18766 / IAM 14443 / JCM 21226 / LMG 7866 / NBRC 102419 / NCTC 12128 / CDC 0568-73)).